Consider the following 313-residue polypeptide: Porphobilinogen deaminase (313 aa).

Position 241 is an S-(dipyrrolylmethanemethyl)cysteine (Cys241).

This sequence belongs to the HMBS family. In terms of assembly, monomer. It depends on dipyrromethane as a cofactor.

It catalyses the reaction 4 porphobilinogen + H2O = hydroxymethylbilane + 4 NH4(+). It functions in the pathway porphyrin-containing compound metabolism; protoporphyrin-IX biosynthesis; coproporphyrinogen-III from 5-aminolevulinate: step 2/4. Tetrapolymerization of the monopyrrole PBG into the hydroxymethylbilane pre-uroporphyrinogen in several discrete steps. The sequence is that of Porphobilinogen deaminase from Sulfurimonas denitrificans (strain ATCC 33889 / DSM 1251) (Thiomicrospira denitrificans (strain ATCC 33889 / DSM 1251)).